The primary structure comprises 87 residues: Small ribosomal subunit protein uS17 (87 aa).

It belongs to the universal ribosomal protein uS17 family. As to quaternary structure, part of the 30S ribosomal subunit.

One of the primary rRNA binding proteins, it binds specifically to the 5'-end of 16S ribosomal RNA. This chain is Small ribosomal subunit protein uS17, found in Syntrophobacter fumaroxidans (strain DSM 10017 / MPOB).